The sequence spans 972 residues: RNA polymerase-associated protein RapA (972 aa).

A Helicase ATP-binding domain is found at 164-334 (EVGRRYAPRV…FARLRLLDPD (171 aa)). 177–184 (DEVGLGKT) contributes to the ATP binding site. The DEAH box motif lies at 280-283 (DEAH). One can recognise a Helicase C-terminal domain in the interval 493 to 671 (RVNWLLEMLK…HEPEALENLI (179 aa)).

The protein belongs to the SNF2/RAD54 helicase family. RapA subfamily. In terms of assembly, interacts with the RNAP. Has a higher affinity for the core RNAP than for the holoenzyme. Its ATPase activity is stimulated by binding to RNAP.

Its function is as follows. Transcription regulator that activates transcription by stimulating RNA polymerase (RNAP) recycling in case of stress conditions such as supercoiled DNA or high salt concentrations. Probably acts by releasing the RNAP, when it is trapped or immobilized on tightly supercoiled DNA. Does not activate transcription on linear DNA. Probably not involved in DNA repair. In Photobacterium profundum (strain SS9), this protein is RNA polymerase-associated protein RapA.